Here is a 96-residue protein sequence, read N- to C-terminus: Conantokin-E (96 aa).

The N-terminal stretch at 1 to 24 (LLVPLVTFHLILGMGTLDHGGALT) is a signal peptide. Positions 25 to 72 (ERRSADATALKPEPVLLQKSDARSTDDNDKDRLTQMKRILKKRGNKAR) are excised as a propeptide. Positions 28–57 (SADATALKPEPVLLQKSDARSTDDNDKDRL) are disordered. Over residues 44–57 (SDARSTDDNDKDRL) the composition is skewed to basic and acidic residues. Residues glutamate 75, glutamate 76, glutamate 82, glutamate 86, and glutamate 95 each carry the 4-carboxyglutamate modification. Glutamate 82 and glutamate 86 together coordinate a divalent metal cation. Cysteine 83 and cysteine 96 form a disulfide bridge.

This sequence belongs to the conotoxin B superfamily. In terms of tissue distribution, expressed by the venom duct.

The protein resides in the secreted. Conantokins inhibit N-methyl-D-aspartate (NMDA) receptors. This toxin has the highest potency for the NR2B/GRIN2B subunit, followed by NR2A/GRIN2A, NR2C/GRIN2C, and NR2D/GRIN2D subunits. The protein is Conantokin-E of Conus ermineus (Agate cone).